Here is a 288-residue protein sequence, read N- to C-terminus: Quinate/shikimate dehydrogenase (288 aa).

Residues K71 and D107 each coordinate substrate. NAD(+) contacts are provided by residues 132-135 (AGGA), 155-158 (NRKD), K205, 232-235 (CVYN), and G255.

Belongs to the shikimate dehydrogenase family. As to quaternary structure, homodimer.

It catalyses the reaction L-quinate + NAD(+) = 3-dehydroquinate + NADH + H(+). It carries out the reaction L-quinate + NADP(+) = 3-dehydroquinate + NADPH + H(+). The enzyme catalyses shikimate + NADP(+) = 3-dehydroshikimate + NADPH + H(+). The catalysed reaction is shikimate + NAD(+) = 3-dehydroshikimate + NADH + H(+). It functions in the pathway metabolic intermediate biosynthesis; chorismate biosynthesis; chorismate from D-erythrose 4-phosphate and phosphoenolpyruvate: step 4/7. In terms of biological role, the actual biological function of YdiB remains unclear, nor is it known whether 3-dehydroshikimate or quinate represents the natural substrate. Catalyzes the reversible NAD-dependent reduction of both 3-dehydroshikimate (DHSA) and 3-dehydroquinate to yield shikimate (SA) and quinate, respectively. It can use both NAD or NADP for catalysis, however it has higher catalytic efficiency with NAD. In Salmonella agona (strain SL483), this protein is Quinate/shikimate dehydrogenase.